The following is a 75-amino-acid chain: Dermaseptin-A3 (75 aa).

Positions 1 to 22 are cleaved as a signal peptide; the sequence is MAFLKKSLFLVLLLGLISLSIC. The propeptide occupies 23-43; the sequence is EEEKRENEVEEEQEDDEQSEL. Gln-72 is modified (glutamine amide). Residues 74-75 constitute a propeptide that is removed on maturation; it reads EQ.

It belongs to the frog skin active peptide (FSAP) family. Dermaseptin subfamily. Expressed by the skin glands.

The protein resides in the secreted. In terms of biological role, possesses a potent antimicrobial activity against Gram-positive and Gram-negative bacteria. Probably acts by disturbing membrane functions with its amphipathic structure. This Agalychnis annae (Blue-sided leaf frog) protein is Dermaseptin-A3.